We begin with the raw amino-acid sequence, 230 residues long: Ureidoacrylate amidohydrolase RutB (230 aa).

Catalysis depends on aspartate 24, which acts as the Proton acceptor. Lysine 133 is a catalytic residue. The active-site Nucleophile is the cysteine 166.

It belongs to the isochorismatase family. RutB subfamily.

It carries out the reaction (Z)-3-ureidoacrylate + H2O + H(+) = (Z)-3-aminoacrylate + NH4(+) + CO2. The catalysed reaction is (Z)-3-ureidoacrylate + H2O = (Z)-3-aminoacrylate + carbamate + H(+). It catalyses the reaction (Z)-2-methylureidoacrylate + H2O + H(+) = (Z)-2-methylaminoacrylate + NH4(+) + CO2. Hydrolyzes ureidoacrylate to form aminoacrylate and carbamate. The carbamate hydrolyzes spontaneously, thereby releasing one of the nitrogen atoms of the pyrimidine ring as ammonia and one of its carbon atoms as CO2. In Enterobacter sp. (strain 638), this protein is Ureidoacrylate amidohydrolase RutB.